Here is a 293-residue protein sequence, read N- to C-terminus: MQGKIFILPKDSTNQQFVELSHPLTGRPLRYLLTNDHLLQILQVGDSSKQRSWFVGDHVVSDGYLYVCTPIDLLALVLPIIQELTWSRRKEPNRYVSFEDFIEHFDNMGPHYPRVSEVLSPNLLNTLHRICKVNEPVGSLPKTFQLDESSVVKILLRKAKVAQENLPPSIVTELKKQLAPLDLRTPLPQDLLELSCKWHAASLVCEDLQPEWYNKLAYWQEELAPLHAYTKNLEESRKILVEKEALLNSKKRPQNSDITSSLLKKPNRKQATKKSKYFSGEGMTKISSFFTKK.

The disordered stretch occupies residues 251–278; the sequence is KRPQNSDITSSLLKKPNRKQATKKSKYF. The span at 265–276 shows a compositional bias: basic residues; the sequence is KPNRKQATKKSK.

The protein belongs to the RNase H2 subunit B family. In terms of assembly, component of the RNase H2 complex.

It localises to the nucleus. It is found in the cytoplasm. Non catalytic subunit of RNase H2, an endonuclease that specifically degrades the RNA of RNA:DNA hybrids. Participates in DNA replication, possibly by mediating the removal of lagging-strand Okazaki fragment RNA primers during DNA replication. Mediates the excision of single ribonucleotides from DNA:RNA duplexes. This is Ribonuclease H2 subunit B (rnh202) from Schizosaccharomyces pombe (strain 972 / ATCC 24843) (Fission yeast).